Here is a 637-residue protein sequence, read N- to C-terminus: MSQQETHGFQTEVKQLLQLMIHSLYSNKEIFLRELVSNAADAADKLRYLALTDDALYEGDGELRVRVSTDKEKGTVTISDNGIGMTRDSVIEHLGTIAKSGTKEFFNNLSGEANKDSQLIGQFGVGFYSAFIVAKKVTVRTRAAGHPANEGVLWESEGEGSFNVETITKNSRGTEIVLHLRDEEKEFADDWRLRSIITKYSDHISVPVEMFEAGKDAQEGEDGETIAAVEGQWKPMNKATALWTRNKSDISDEEYQEFYKHISHDYTDALKWSHNRVEGKQEYTSLLYIPAKAPWDMWNRDHKHGLKLFVQRVFIMDEAEQFLPNYLRFVRGLLDSNDLPLNVSREILQDNQVTTAMRVGVTKRVLGMLEKLAKDEPGQYQSFWAEFGQVLKEGPAEDFANKERIAGLLRFASTHEGSAATTVSLEDYISRMKEGQDKIYYIVADSHEAAANSPHLELLRKKGIEVLLMSERIDEWLINHLTEFKGKKLHSVTRGDLELGELEDAADKEAKDKITEEAKGLVERMKAALGAKVSEVKVTTRLTDTPACVVAGEGEMSTQMIKLMQAAGQAVPESKPTFEINPNHPLVARLNDEADEQLFADWASLLLQQAQLSEKGSLADPSAFIKLMNQMLLANAK.

Positions 1-345 (MSQQETHGFQ…SNDLPLNVSR (345 aa)) are a; substrate-binding. The b stretch occupies residues 346-562 (EILQDNQVTT…EGEMSTQMIK (217 aa)). The interval 563 to 637 (LMQAAGQAVP…MNQMLLANAK (75 aa)) is c.

Belongs to the heat shock protein 90 family. As to quaternary structure, homodimer.

It is found in the cytoplasm. In terms of biological role, molecular chaperone. Has ATPase activity. The chain is Chaperone protein HtpG from Shewanella denitrificans (strain OS217 / ATCC BAA-1090 / DSM 15013).